The sequence spans 705 residues: Phosphoribosylformylglycinamidine synthase subunit PurL (705 aa).

His-32 is an active-site residue. Tyr-35 is an ATP binding site. Residue Glu-76 participates in Mg(2+) binding. Substrate-binding positions include 77 to 80 (SHNH) and Arg-99. The Proton acceptor role is filled by His-78. Asp-100 is a binding site for Mg(2+). Position 224 (Gln-224) interacts with substrate. Asp-252 contributes to the Mg(2+) binding site. 296–298 (ESQ) provides a ligand contact to substrate. ATP-binding residues include Asp-471 and Gly-508. Asn-509 contributes to the Mg(2+) binding site. Residue Ser-511 coordinates substrate.

Belongs to the FGAMS family. In terms of assembly, monomer. Part of the FGAM synthase complex composed of 1 PurL, 1 PurQ and 2 PurS subunits.

It localises to the cytoplasm. It catalyses the reaction N(2)-formyl-N(1)-(5-phospho-beta-D-ribosyl)glycinamide + L-glutamine + ATP + H2O = 2-formamido-N(1)-(5-O-phospho-beta-D-ribosyl)acetamidine + L-glutamate + ADP + phosphate + H(+). Its pathway is purine metabolism; IMP biosynthesis via de novo pathway; 5-amino-1-(5-phospho-D-ribosyl)imidazole from N(2)-formyl-N(1)-(5-phospho-D-ribosyl)glycinamide: step 1/2. Part of the phosphoribosylformylglycinamidine synthase complex involved in the purines biosynthetic pathway. Catalyzes the ATP-dependent conversion of formylglycinamide ribonucleotide (FGAR) and glutamine to yield formylglycinamidine ribonucleotide (FGAM) and glutamate. The FGAM synthase complex is composed of three subunits. PurQ produces an ammonia molecule by converting glutamine to glutamate. PurL transfers the ammonia molecule to FGAR to form FGAM in an ATP-dependent manner. PurS interacts with PurQ and PurL and is thought to assist in the transfer of the ammonia molecule from PurQ to PurL. This is Phosphoribosylformylglycinamidine synthase subunit PurL from Pyrococcus horikoshii (strain ATCC 700860 / DSM 12428 / JCM 9974 / NBRC 100139 / OT-3).